Consider the following 102-residue polypeptide: N(4)-acetylcytidine amidohydrolase (102 aa).

The ASCH domain maps to 6 to 93; it reads TFFSRFEQDI…IKEIYPGLDE (88 aa). Residue lysine 20 is the Proton acceptor of the active site. The active-site Nucleophile is the threonine 23. The active-site Proton donor is the glutamate 73.

It belongs to the N(4)-acetylcytidine amidohydrolase family.

It carries out the reaction N(4)-acetylcytidine + H2O = cytidine + acetate + H(+). The catalysed reaction is N(4)-acetyl-2'-deoxycytidine + H2O = 2'-deoxycytidine + acetate + H(+). The enzyme catalyses N(4)-acetylcytosine + H2O = cytosine + acetate + H(+). Functionally, catalyzes the hydrolysis of N(4)-acetylcytidine (ac4C). The protein is N(4)-acetylcytidine amidohydrolase of Serratia proteamaculans (strain 568).